An 88-amino-acid polypeptide reads, in one-letter code: uncharacterized protein (88 aa).

The signal sequence occupies residues 1–25 (MRAAFWVGCAALLLSACSSEPVQQA).

This is an uncharacterized protein from Escherichia coli O6:H1 (strain CFT073 / ATCC 700928 / UPEC).